The following is a 346-amino-acid chain: Glycerol-3-phosphate dehydrogenase [NAD(P)+] (346 aa).

Ser-15, Trp-16, Arg-36, and Lys-110 together coordinate NADPH. Residues Lys-110, Gly-139, and Ser-141 each contribute to the sn-glycerol 3-phosphate site. Ala-143 is a binding site for NADPH. Sn-glycerol 3-phosphate is bound by residues Lys-194, Asp-247, Ser-257, Arg-258, and Asn-259. Lys-194 (proton acceptor) is an active-site residue. Arg-258 serves as a coordination point for NADPH. NADPH is bound by residues Val-282 and Glu-284.

The protein belongs to the NAD-dependent glycerol-3-phosphate dehydrogenase family.

It is found in the cytoplasm. The enzyme catalyses sn-glycerol 3-phosphate + NAD(+) = dihydroxyacetone phosphate + NADH + H(+). The catalysed reaction is sn-glycerol 3-phosphate + NADP(+) = dihydroxyacetone phosphate + NADPH + H(+). The protein operates within membrane lipid metabolism; glycerophospholipid metabolism. In terms of biological role, catalyzes the reduction of the glycolytic intermediate dihydroxyacetone phosphate (DHAP) to sn-glycerol 3-phosphate (G3P), the key precursor for phospholipid synthesis. In Xylella fastidiosa (strain M23), this protein is Glycerol-3-phosphate dehydrogenase [NAD(P)+].